Here is a 211-residue protein sequence, read N- to C-terminus: Thymidylate kinase (211 aa).

Residue 11 to 18 (GPDGAGKT) participates in ATP binding.

Belongs to the thymidylate kinase family.

The catalysed reaction is dTMP + ATP = dTDP + ADP. Phosphorylation of dTMP to form dTDP in both de novo and salvage pathways of dTTP synthesis. The protein is Thymidylate kinase of Streptococcus pyogenes serotype M1.